The chain runs to 620 residues: Cilia- and flagella-associated protein 52 (620 aa).

WD repeat units follow at residues 62-106 (GHGN…LLAR), 109-150 (LHKG…AICG), 156-195 (LNVG…RKIW), 288-327 (QLQG…ETLI), 330-369 (CHFD…ELLR), 372-411 (VPNM…LMYV), 415-454 (AHRI…QKLE), 459-498 (EHKS…RNQM), 500-539 (LANT…VIRE), 543-582 (SLSG…VTHV), and 585-620 (GHSG…PYTS).

Belongs to the CFAP52 family. In terms of assembly, microtubule inner protein component of sperm flagellar doublet microtubules. Interacts with BRCA2. Interacts with the CCT chaperonin complex. Interacts with HSP70. Interacts with AK8. Interacts with CFAP45. Interacts with DNAI1. Interacts with IQDC. As to expression, expressed in respiratory cells and sperm (at protein level). Highly expressed in testis. Up-regulated in hepatocellular carcinoma (HCC).

The protein localises to the cytoplasm. Its subcellular location is the cytoskeleton. The protein resides in the cilium axoneme. It is found in the flagellum axoneme. Microtubule inner protein (MIP) part of the dynein-decorated doublet microtubules (DMTs) in cilia axoneme. Important for proper ciliary and flagellar beating. May act in cooperation with CFAP45 and axonemal dynein subunit DNAH11. May play a role in cell growth and/or survival. This Homo sapiens (Human) protein is Cilia- and flagella-associated protein 52.